The following is a 1080-amino-acid chain: Phycobiliprotein ApcE (1080 aa).

Residues 18 to 76 (QTLAVATITQAEQQDRFLGTGELNELATYFASGAKRLEIAQTLTENSEIIVSRAANRIF) form a phycobilin-like 1 region. Residues 77-144 (VGGSPMSFLE…GPTPPGFRPI (68 aa)) form a phycobilin-like loop region. A phycobilin-like 2 region spans residues 145–237 (NVARYGPSNM…YMDVLLTEFK (93 aa)). Cys195 lines the (2R,3E)-phycocyanobilin pocket. PBS-linker domains follow at residues 252-432 (DQQG…FRKV), 514-693 (LGPK…QKQE), 710-888 (PDIQ…KQND), and 922-1080 (STSA…SLGN). Residues 906–930 (GTSSSGRNGFTDLGRSSTSAQGQLG) form a disordered region.

It belongs to the phycobilisome linker protein family. In terms of assembly, phycobilisomes of this organism are composed of a two cylinder core, from which six rods radiate. The core is mainly composed of allophycocyanin alpha and beta chains, and of three minor components: the allophycocyanin alpha-B chain, a 18.3 kDa polypeptide, and the anchor polypeptide L-CM. Post-translationally, contains one covalently linked bilin chromophore. This protein autochromophorylates.

It is found in the cellular thylakoid membrane. Its function is as follows. This protein is postulated to act both as terminal energy acceptor (by its phycobilin-like domains) and as a linker polypeptide (by its repeats and arms) that stabilizes the phycobilisome core architecture. Functionally, has intrinsic bilin lyase activity. This is Phycobiliprotein ApcE (apcE) from Microchaete diplosiphon (Fremyella diplosiphon).